The chain runs to 87 residues: MAKSSTKRRPAPEKPVKTRKCVFCSKKGKNQDIDYKDTQLLRTYISERGKIRARRVTGNCVQHQRDIAIAVKNAREVALLPFSSSTR.

This sequence belongs to the bacterial ribosomal protein bS18 family. As to quaternary structure, part of the 30S ribosomal subunit. Forms a tight heterodimer with protein bS6.

In terms of biological role, binds as a heterodimer with protein bS6 to the central domain of the 16S rRNA, where it helps stabilize the platform of the 30S subunit. The polypeptide is Small ribosomal subunit protein bS18B (Mycolicibacterium vanbaalenii (strain DSM 7251 / JCM 13017 / BCRC 16820 / KCTC 9966 / NRRL B-24157 / PYR-1) (Mycobacterium vanbaalenii)).